A 58-amino-acid polypeptide reads, in one-letter code: MKQDMIDYLMKNPQVLTKLENGEASLIGIPDKLIPSIVDIFNKKMTLSKKCKGIFWEQ.

Residues 1 to 52 constitute a propeptide that is removed on maturation; it reads MKQDMIDYLMKNPQVLTKLENGEASLIGIPDKLIPSIVDIFNKKMTLSKKCK. Tryptophan 56 is lipidated: 3'-geranyl-2',N2-cyclotryptophan; in strain RO-E-2 /NRRL B-23055.

In terms of assembly, interacts directly with the sensor histidine kinase ComP and stimulates its activity. Trp-56 is modified by geranylation, which is essential for activity. Modified by the tryptophan prenyltransferase ComQ before export to the extracellular environment. The type of isoprenyl derivative differs among the different pherotypes and depends on ComX primary sequence.

Its subcellular location is the secreted. In terms of biological role, part of a major quorum-sensing system that regulates the development of genetic competence. Acts through the activation of the two-component regulatory system ComP/ComA composed of a sensor histidine kinase, ComP, and a response regulator, ComA. The polypeptide is ComX pheromone (Bacillus spizizenii (Bacillus subtilis subsp. spizizenii)).